The chain runs to 650 residues: Acetyl-coenzyme A synthetase (650 aa).

Residues 191 to 194 (RGGR), threonine 311, and asparagine 335 each bind CoA. Residues 387–389 (GEP), 411–416 (DTWWQT), aspartate 500, and arginine 515 each bind ATP. Residue serine 523 participates in CoA binding. Arginine 526 is an ATP binding site. Valine 537, histidine 539, and valine 542 together coordinate Mg(2+). Residue arginine 584 coordinates CoA. N6-acetyllysine is present on lysine 609.

This sequence belongs to the ATP-dependent AMP-binding enzyme family. Mg(2+) is required as a cofactor. Post-translationally, acetylated. Deacetylation by the SIR2-homolog deacetylase activates the enzyme.

The catalysed reaction is acetate + ATP + CoA = acetyl-CoA + AMP + diphosphate. Catalyzes the conversion of acetate into acetyl-CoA (AcCoA), an essential intermediate at the junction of anabolic and catabolic pathways. AcsA undergoes a two-step reaction. In the first half reaction, AcsA combines acetate with ATP to form acetyl-adenylate (AcAMP) intermediate. In the second half reaction, it can then transfer the acetyl group from AcAMP to the sulfhydryl group of CoA, forming the product AcCoA. The chain is Acetyl-coenzyme A synthetase from Shewanella baltica (strain OS155 / ATCC BAA-1091).